A 1392-amino-acid chain; its full sequence is ENHANCER OF AG-4 protein 2 (1392 aa).

Positions 20–77 (LGDLVLAKVKGFPAWPAKISRPEDWDRAPDPKKYFVQFFGTEEIAFVAPPDIQAFTSE) constitute a PWWP domain. Residues 184 to 194 (ESKVKTTSPVS) show a composition bias toward polar residues. 4 disordered regions span residues 184–354 (ESKV…STGT), 384–428 (KRQR…PAAQ), 575–613 (KKPQ…GERL), and 723–766 (QGHH…GGSL). Composition is skewed to basic and acidic residues over residues 196–215 (SLEH…DKGT), 239–258 (KEAG…DKSN), and 311–345 (LESE…KCEI). Residues 391 to 400 (EHATSPSFSG) are compositionally biased toward polar residues. Basic and acidic residues predominate over residues 401–417 (SRDKSGKGHLEQKDRSS). Polar residues-rich tracts occupy residues 591–601 (KISSSQSQPAN) and 725–744 (HHQQ…SRNQ). A CID domain is found at 771-912 (EAAISRDAFE…RYIDDIRASG (142 aa)). 3 disordered regions span residues 957–986 (FFSS…AGER), 1014–1356 (LEME…NYQP), and 1369–1392 (PGHT…WRPA). Positions 1059 to 1129 (EDSPPLPQES…SPPPPPPPPS (71 aa)) are enriched in pro residues. Residues 1157–1175 (LSHQTYPGSMQQDRSSIFT) show a composition bias toward polar residues. A compositionally biased stretch (low complexity) spans 1215–1225 (SSREPSSFTSS). Composition is skewed to polar residues over residues 1240–1255 (EASS…TPLS) and 1265–1284 (APSS…QHSY). A compositionally biased stretch (basic and acidic residues) spans 1293–1306 (QRDDARRYRNEEPW). Residues 1311-1320 (SGHSAENQNG) are compositionally biased toward polar residues.

As to expression, expressed in the inflorescence meristem, floral primordia, inflorescence stem, and floral pedicels. Also detected in the shoot apical meristem, stems, leaves, embryos, and roots.

It is found in the nucleus. Its function is as follows. Transcription factor that functions as a repressor of flowering by enhancing the expression of several genes that delay flowering including FLC, FLM/MAF1, MAF2 and SVP. Also acts in the floral homeotic AGAMOUS (AG) pathway, specifically by processing the AGAMOUS pre-mRNA. Functions in association with HUA1 and HEN4 in AG pre-mRNA processing. Involved in all three aspects of the AG functions, the specification of stamen and carpel identities, the control of floral determinacy, and the spatial restriction of AP1 expression. Acts as a transcription regulator that controls anthocyanin accumulation. The sequence is that of ENHANCER OF AG-4 protein 2 from Arabidopsis thaliana (Mouse-ear cress).